The primary structure comprises 392 residues: Na(+)/H(+) antiporter NhaA 2 (392 aa).

The next 11 helical transmembrane spans lie at 20 to 40, 61 to 81, 99 to 119, 127 to 147, 158 to 178, 181 to 201, 209 to 229, 265 to 285, 298 to 318, 336 to 356, and 365 to 385; these read FFAA…AALI, LSVS…LVGL, ALPG…YVAF, IGGW…VLSL, IFLS…IALF, SDLS…LVAL, LLPY…SGIH, VAFA…LSGI, VALG…ALAI, GVAA…ALAF, and EVKV…VVVL.

Belongs to the NhaA Na(+)/H(+) (TC 2.A.33) antiporter family.

It is found in the cell inner membrane. It carries out the reaction Na(+)(in) + 2 H(+)(out) = Na(+)(out) + 2 H(+)(in). Its function is as follows. Na(+)/H(+) antiporter that extrudes sodium in exchange for external protons. This is Na(+)/H(+) antiporter NhaA 2 from Pseudomonas syringae pv. syringae (strain B728a).